A 249-amino-acid chain; its full sequence is U2 small nuclear ribonucleoprotein A' (249 aa).

LRR repeat units lie at residues 20–41 (KERE…GATE), 43–64 (QFDT…PYLN), 65–87 (RLGT…GEFL), and 89–110 (KLHS…DPLA). The 39-residue stretch at 123 to 161 (NNITKKANYRLYVIHKLKSLRVLDFIKIKAKERAEAASL) folds into the LRRCT domain.

The protein belongs to the U2 small nuclear ribonucleoprotein A family.

Its subcellular location is the nucleus. It localises to the nucleus speckle. In terms of biological role, this protein is associated with sn-RNP U2. It helps the A' protein to bind stem loop IV of U2 snRNA. This chain is U2 small nuclear ribonucleoprotein A', found in Arabidopsis thaliana (Mouse-ear cress).